Consider the following 297-residue polypeptide: Oxidoreductase aprR (297 aa).

It belongs to the NmrA-type oxidoreductase family. Isoflavone reductase subfamily.

It functions in the pathway secondary metabolite biosynthesis. Oxidoreductase; part of the gene cluster that mediates the biosynthesis of the asperipin-2a, a bicyclic peptide that possesses two macrocyclic ether rings consisting of 14- and 17-membered paracyclophans. The pathway starts with the processing of the precursor aprA by kexin proteases to produce 11 identical copies of the hexapeptide Phe-Tyr-Tyr-Thr-Gly-Tyr. Macrocyclization of asperipin-2a may accompany an alpha-hydroxylation-dehydration sequence to give an imine, which is readily hydrolyzed to yield putative ketone intermediate. The reductase aprR may be required for the final reduction to yield asperipin-2a. This Aspergillus flavus (strain ATCC 200026 / FGSC A1120 / IAM 13836 / NRRL 3357 / JCM 12722 / SRRC 167) protein is Oxidoreductase aprR.